The sequence spans 89 residues: Aminoacyl carrier protein 2 (89 aa).

A Carrier domain is found at 6-84 (INVQNRVLSV…AMERMILNQL (79 aa)). The residue at position 42 (S42) is an O-(pantetheine 4'-phosphoryl)serine.

Post-translationally, 4'-phosphopantetheine is transferred from CoA to a specific serine of the apo-form of this carrier protein.

Functionally, aminoacyl carrier protein. Can be charged with L-glycine via the formation of a thioester bond between the amino acid and the 4'-phosphopantetheinyl prosthetic group, catalyzed by the bll6282 ligase. This chain is Aminoacyl carrier protein 2, found in Bradyrhizobium diazoefficiens (strain JCM 10833 / BCRC 13528 / IAM 13628 / NBRC 14792 / USDA 110).